The primary structure comprises 141 residues: VLSAADKANVKGVFSKIGGHADDYGAETLERMFIAYPQTKTYFPHFDLHHGSAQIKAHGKKVAAALVEAVNHIDDITGALSKLSDLHAQKLRVDPVNFKFLGHCFLVVVAIHHPAALTPEVHASLDKFMCAVGAVLTAKYR.

Residues 1-141 (VLSAADKANV…VGAVLTAKYR (141 aa)) enclose the Globin domain. His58 contributes to the O2 binding site. His87 contributes to the heme b binding site.

Belongs to the globin family. Heterotetramer of two alpha chains and two beta chains. As to expression, red blood cells.

In terms of biological role, involved in oxygen transport from the lung to the various peripheral tissues. The polypeptide is Hemoglobin subunit alpha-A (HBAA) (Chloephaga melanoptera (Andean goose)).